We begin with the raw amino-acid sequence, 204 residues long: FMN-dependent NADH:quinone oxidoreductase (204 aa).

Residues Ser-10 and 15 to 17 (SLS) each bind FMN.

Belongs to the azoreductase type 1 family. Homodimer. Requires FMN as cofactor.

It catalyses the reaction 2 a quinone + NADH + H(+) = 2 a 1,4-benzosemiquinone + NAD(+). The enzyme catalyses N,N-dimethyl-1,4-phenylenediamine + anthranilate + 2 NAD(+) = 2-(4-dimethylaminophenyl)diazenylbenzoate + 2 NADH + 2 H(+). In terms of biological role, quinone reductase that provides resistance to thiol-specific stress caused by electrophilic quinones. Functionally, also exhibits azoreductase activity. Catalyzes the reductive cleavage of the azo bond in aromatic azo compounds to the corresponding amines. The chain is FMN-dependent NADH:quinone oxidoreductase from Rhizobium johnstonii (strain DSM 114642 / LMG 32736 / 3841) (Rhizobium leguminosarum bv. viciae).